Consider the following 317-residue polypeptide: UAP56-interacting factor (317 aa).

The residue at position 1 (Met-1) is an N-acetylmethionine. The disordered stretch occupies residues 1–26 (MNRFGTRLVGATATPPPPPKARSNEN). Position 14 is a phosphothreonine (Thr-14). Ser-23 is modified (phosphoserine). The UAP56-binding motif motif lies at 26–44 (NLDKIDMSLDDIIKLNRKE). Residues Ser-60 and Ser-117 each carry the phosphoserine modification. Residue Lys-139 forms a Glycyl lysine isopeptide (Lys-Gly) (interchain with G-Cter in SUMO1) linkage. Lys-260 participates in a covalent cross-link: Glycyl lysine isopeptide (Lys-Gly) (interchain with G-Cter in SUMO2).

The protein belongs to the UIF family. In terms of assembly, interacts with DDX39B/UAP56 and NXF1; interaction with DDX39B/UAP56 and NXF1 are mutually exclusive. Interacts with SSRP1; required for its recruitment to mRNAs. Interacts with CHTOP.

It is found in the nucleus. It localises to the nucleoplasm. Its subcellular location is the nucleus speckle. Its function is as follows. Required for mRNA export from the nucleus to the cytoplasm. Acts as an adapter that uses the DDX39B/UAP56-NFX1 pathway to ensure efficient mRNA export and delivering to the nuclear pore. Associates with spliced and unspliced mRNAs simultaneously with ALYREF/THOC4. This chain is UAP56-interacting factor (Fyttd1), found in Mus musculus (Mouse).